The following is a 281-amino-acid chain: Pantothenate synthetase (281 aa).

30–37 (MGNLHAGH) contributes to the ATP binding site. H37 (proton donor) is an active-site residue. Q61 lines the (R)-pantoate pocket. Q61 serves as a coordination point for beta-alanine. 149–152 (GRKD) contacts ATP. Q155 lines the (R)-pantoate pocket. ATP-binding positions include V178 and 186 to 189 (MSSR).

It belongs to the pantothenate synthetase family. Homodimer.

Its subcellular location is the cytoplasm. The enzyme catalyses (R)-pantoate + beta-alanine + ATP = (R)-pantothenate + AMP + diphosphate + H(+). It functions in the pathway cofactor biosynthesis; (R)-pantothenate biosynthesis; (R)-pantothenate from (R)-pantoate and beta-alanine: step 1/1. In terms of biological role, catalyzes the condensation of pantoate with beta-alanine in an ATP-dependent reaction via a pantoyl-adenylate intermediate. The sequence is that of Pantothenate synthetase from Shewanella amazonensis (strain ATCC BAA-1098 / SB2B).